Consider the following 318-residue polypeptide: Ribosomal RNA small subunit methyltransferase H (318 aa).

Residues 34 to 36 (GGH), Asp53, Phe82, Asp103, and Gln110 contribute to the S-adenosyl-L-methionine site.

It belongs to the methyltransferase superfamily. RsmH family.

It localises to the cytoplasm. It catalyses the reaction cytidine(1402) in 16S rRNA + S-adenosyl-L-methionine = N(4)-methylcytidine(1402) in 16S rRNA + S-adenosyl-L-homocysteine + H(+). In terms of biological role, specifically methylates the N4 position of cytidine in position 1402 (C1402) of 16S rRNA. The protein is Ribosomal RNA small subunit methyltransferase H of Limosilactobacillus reuteri (strain DSM 20016) (Lactobacillus reuteri).